Reading from the N-terminus, the 298-residue chain is ATP synthase gamma chain (298 aa).

This sequence belongs to the ATPase gamma chain family. In terms of assembly, F-type ATPases have 2 components, CF(1) - the catalytic core - and CF(0) - the membrane proton channel. CF(1) has five subunits: alpha(3), beta(3), gamma(1), delta(1), epsilon(1). CF(0) has three main subunits: a, b and c.

The protein resides in the cell inner membrane. Functionally, produces ATP from ADP in the presence of a proton gradient across the membrane. The gamma chain is believed to be important in regulating ATPase activity and the flow of protons through the CF(0) complex. The protein is ATP synthase gamma chain of Albidiferax ferrireducens (strain ATCC BAA-621 / DSM 15236 / T118) (Rhodoferax ferrireducens).